Reading from the N-terminus, the 332-residue chain is Ketol-acid reductoisomerase (NADP(+)) (332 aa).

A KARI N-terminal Rossmann domain is found at 2–182 (AKIYHDLEVS…GATRAGVLET (181 aa)). Residues 25–28 (YGSQ), R48, S53, and 83–86 (DTEQ) contribute to the NADP(+) site. H108 is a catalytic residue. G134 is a binding site for NADP(+). The 146-residue stretch at 183 to 328 (TFKEETETDL…KVIREMMPWL (146 aa)) folds into the KARI C-terminal knotted domain. Residues D191, E195, E227, and E231 each contribute to the Mg(2+) site. S252 contacts substrate.

It belongs to the ketol-acid reductoisomerase family. It depends on Mg(2+) as a cofactor.

The enzyme catalyses (2R)-2,3-dihydroxy-3-methylbutanoate + NADP(+) = (2S)-2-acetolactate + NADPH + H(+). It carries out the reaction (2R,3R)-2,3-dihydroxy-3-methylpentanoate + NADP(+) = (S)-2-ethyl-2-hydroxy-3-oxobutanoate + NADPH + H(+). Its pathway is amino-acid biosynthesis; L-isoleucine biosynthesis; L-isoleucine from 2-oxobutanoate: step 2/4. The protein operates within amino-acid biosynthesis; L-valine biosynthesis; L-valine from pyruvate: step 2/4. In terms of biological role, involved in the biosynthesis of branched-chain amino acids (BCAA). Catalyzes an alkyl-migration followed by a ketol-acid reduction of (S)-2-acetolactate (S2AL) to yield (R)-2,3-dihydroxy-isovalerate. In the isomerase reaction, S2AL is rearranged via a Mg-dependent methyl migration to produce 3-hydroxy-3-methyl-2-ketobutyrate (HMKB). In the reductase reaction, this 2-ketoacid undergoes a metal-dependent reduction by NADPH to yield (R)-2,3-dihydroxy-isovalerate. In Dictyoglomus thermophilum (strain ATCC 35947 / DSM 3960 / H-6-12), this protein is Ketol-acid reductoisomerase (NADP(+)).